The sequence spans 31 residues: Cycloviolin-A (31 aa).

Residues 1–31 constitute a cross-link (cyclopeptide (Gly-Asn)); sequence GVIPCGESCVFIPCISAAIGCSCKNKVCYRN. 3 cysteine pairs are disulfide-bonded: Cys5-Cys21, Cys9-Cys23, and Cys14-Cys28.

This is a cyclic peptide.

Functionally, probably participates in a plant defense mechanism. Has anti-HIV activity. This is Cycloviolin-A from Leonia cymosa (Sacha uba).